The chain runs to 304 residues: N-acetylglucosaminyl-phosphatidylinositol de-N-acetylase (304 aa).

The Lumenal segment spans residues 1–20; the sequence is MKMLRRTKVNFSKLLYKITK. Residues 21-38 traverse the membrane as a helical segment; the sequence is LAIVLTILYIYFTPKIVS. The Cytoplasmic segment spans residues 39–304; sequence RNNASLQHIF…FVNEFDVYTY (266 aa).

This sequence belongs to the PIGL family.

The protein localises to the endoplasmic reticulum membrane. It carries out the reaction a 6-(N-acetyl-alpha-D-glucosaminyl)-1-(1,2-diacyl-sn-glycero-3-phospho)-1D-myo-inositol + H2O = a 6-(alpha-D-glucosaminyl)-1-(1,2-diacyl-sn-glycero-3-phospho)-1D-myo-inositol + acetate. It functions in the pathway glycolipid biosynthesis; glycosylphosphatidylinositol-anchor biosynthesis. In terms of biological role, involved in the second step of GPI biosynthesis. De-N-acetylation of N-acetylglucosaminyl-phosphatidylinositol. This chain is N-acetylglucosaminyl-phosphatidylinositol de-N-acetylase (GPI12), found in Saccharomyces cerevisiae (strain ATCC 204508 / S288c) (Baker's yeast).